The sequence spans 232 residues: 5'-methylthioadenosine/S-adenosylhomocysteine nucleosidase (232 aa).

The active-site Proton acceptor is the Glu-12. Substrate contacts are provided by residues Gly-78, Ile-152, and 173–174; that span reads ME. The active-site Proton donor is the Asp-197.

This sequence belongs to the PNP/UDP phosphorylase family. MtnN subfamily. In terms of assembly, homodimer.

It catalyses the reaction S-adenosyl-L-homocysteine + H2O = S-(5-deoxy-D-ribos-5-yl)-L-homocysteine + adenine. The enzyme catalyses S-methyl-5'-thioadenosine + H2O = 5-(methylsulfanyl)-D-ribose + adenine. It carries out the reaction 5'-deoxyadenosine + H2O = 5-deoxy-D-ribose + adenine. Its pathway is amino-acid biosynthesis; L-methionine biosynthesis via salvage pathway; S-methyl-5-thio-alpha-D-ribose 1-phosphate from S-methyl-5'-thioadenosine (hydrolase route): step 1/2. Catalyzes the irreversible cleavage of the glycosidic bond in both 5'-methylthioadenosine (MTA) and S-adenosylhomocysteine (SAH/AdoHcy) to adenine and the corresponding thioribose, 5'-methylthioribose and S-ribosylhomocysteine, respectively. Also cleaves 5'-deoxyadenosine, a toxic by-product of radical S-adenosylmethionine (SAM) enzymes, into 5-deoxyribose and adenine. Thus, is required for in vivo function of the radical SAM enzymes biotin synthase and lipoic acid synthase, that are inhibited by 5'-deoxyadenosine accumulation. This Shigella boydii serotype 4 (strain Sb227) protein is 5'-methylthioadenosine/S-adenosylhomocysteine nucleosidase.